Here is a 446-residue protein sequence, read N- to C-terminus: Exodeoxyribonuclease 7 large subunit (446 aa).

It belongs to the XseA family. As to quaternary structure, heterooligomer composed of large and small subunits.

The protein resides in the cytoplasm. It carries out the reaction Exonucleolytic cleavage in either 5'- to 3'- or 3'- to 5'-direction to yield nucleoside 5'-phosphates.. Functionally, bidirectionally degrades single-stranded DNA into large acid-insoluble oligonucleotides, which are then degraded further into small acid-soluble oligonucleotides. In Streptococcus pyogenes serotype M49 (strain NZ131), this protein is Exodeoxyribonuclease 7 large subunit.